Reading from the N-terminus, the 379-residue chain is Pentatricopeptide repeat-containing protein At3g25210, mitochondrial (379 aa).

PPR repeat units follow at residues 142 to 177 (SVPLYNCIIRFCCGRKFLFNRAFDVYNKMLRSDDSK), 179 to 221 (DLET…GVIP), 222 to 256 (DTFVLNMIIKAYAKCLEVDEAIRVFKEMALYGSEP), 257 to 291 (NAYTYSYLVKGVCEKGRVGQGLGFYKEMQVKGMVP), 292 to 326 (NGSCYMVLICSLSMERRLDEAVEVVYDMLANSLSP), and 327 to 361 (DMLTYNTVLTELCRGGRGSEALEMVEEWKKRDPVM).

Belongs to the PPR family. P subfamily.

It is found in the mitochondrion. The chain is Pentatricopeptide repeat-containing protein At3g25210, mitochondrial from Arabidopsis thaliana (Mouse-ear cress).